The chain runs to 834 residues: Serine/threonine-protein kinase TNNI3K (834 aa).

Glycine 2 carries the N-myristoyl glycine lipid modification. Positions 21–49 form a coiled coil; the sequence is SESYAIIIERLEDDLQIKENEFQELRHIF. ANK repeat units follow at residues 66 to 96, 100 to 129, 133 to 162, 166 to 195, 199 to 229, 233 to 262, 268 to 297, 303 to 334, 338 to 367, and 380 to 409; these read RGLS…RPSR, NGFP…DVQQ, GGLT…NVNV, VFFT…DVNV, VGDR…DVNA, EDHV…EVQP, YGDT…TESL, FSET…NINH, DGHT…DMNL, and DEQT…PQDE. The region spanning 462 to 722 is the Protein kinase domain; the sequence is IEFHEIIGSG…EVVRKLEECL (261 aa). ATP is bound by residues 468-476 and lysine 489; that span reads IGSGSFGKV. The active-site Proton acceptor is the aspartate 587. Positions 815–834 are disordered; that stretch reads PMSPMHLHSRRNSGSFEDGN.

This sequence belongs to the protein kinase superfamily. TKL Ser/Thr protein kinase family. MAP kinase kinase kinase subfamily. Interacts with TNNI3, ACTC, ACTA1, MYBPC3, AIP, FABP3 and HADHB. Requires Mg(2+) as cofactor. In terms of processing, autophosphorylated.

Its subcellular location is the nucleus. It localises to the cytoplasm. The enzyme catalyses L-seryl-[protein] + ATP = O-phospho-L-seryl-[protein] + ADP + H(+). It carries out the reaction L-threonyl-[protein] + ATP = O-phospho-L-threonyl-[protein] + ADP + H(+). Functionally, may play a role in cardiac physiology. In Mus musculus (Mouse), this protein is Serine/threonine-protein kinase TNNI3K.